Consider the following 285-residue polypeptide: 2-dehydro-3-deoxyphosphooctonate aldolase (285 aa).

The protein belongs to the KdsA family.

It localises to the cytoplasm. The catalysed reaction is D-arabinose 5-phosphate + phosphoenolpyruvate + H2O = 3-deoxy-alpha-D-manno-2-octulosonate-8-phosphate + phosphate. It functions in the pathway carbohydrate biosynthesis; 3-deoxy-D-manno-octulosonate biosynthesis; 3-deoxy-D-manno-octulosonate from D-ribulose 5-phosphate: step 2/3. The protein operates within bacterial outer membrane biogenesis; lipopolysaccharide biosynthesis. The polypeptide is 2-dehydro-3-deoxyphosphooctonate aldolase (Polaromonas sp. (strain JS666 / ATCC BAA-500)).